A 380-amino-acid polypeptide reads, in one-letter code: Flap endonuclease 1 (380 aa).

Positions 1 to 104 (MGIQGLAKLI…GELAKRAERR (104 aa)) are N-domain. Asp34 is a binding site for Mg(2+). DNA is bound by residues Arg47 and Arg70. Asp86, Glu158, Glu160, Asp179, and Asp181 together coordinate Mg(2+). Positions 122–253 (DVNKFQKRLV…KRAIELIRQY (132 aa)) are I-domain. Glu158 contacts DNA. DNA contacts are provided by Gly231 and Asp233. Position 233 (Asp233) interacts with Mg(2+). The tract at residues 328-380 (LKNARHTSTQGRLDSFFKVMSSPSVKRKEPPKGAKGSASKKAKMSGGKFKKPK) is disordered. Residues 336-344 (TQGRLDSFF) form an interaction with PCNA region. The span at 365–380 (ASKKAKMSGGKFKKPK) shows a compositional bias: basic residues.

It belongs to the XPG/RAD2 endonuclease family. FEN1 subfamily. As to quaternary structure, interacts with PCNA. Three molecules of FEN1 bind to one PCNA trimer with each molecule binding to one PCNA monomer. PCNA stimulates the nuclease activity without altering cleavage specificity. Requires Mg(2+) as cofactor. Post-translationally, phosphorylated. Phosphorylation upon DNA damage induces relocalization to the nuclear plasma.

It is found in the nucleus. It localises to the nucleolus. The protein localises to the nucleoplasm. The protein resides in the mitochondrion. In terms of biological role, structure-specific nuclease with 5'-flap endonuclease and 5'-3' exonuclease activities involved in DNA replication and repair. During DNA replication, cleaves the 5'-overhanging flap structure that is generated by displacement synthesis when DNA polymerase encounters the 5'-end of a downstream Okazaki fragment. It enters the flap from the 5'-end and then tracks to cleave the flap base, leaving a nick for ligation. Also involved in the long patch base excision repair (LP-BER) pathway, by cleaving within the apurinic/apyrimidinic (AP) site-terminated flap. Acts as a genome stabilization factor that prevents flaps from equilibrating into structures that lead to duplications and deletions. Also possesses 5'-3' exonuclease activity on nicked or gapped double-stranded DNA, and exhibits RNase H activity. Also involved in replication and repair of rDNA and in repairing mitochondrial DNA. The protein is Flap endonuclease 1 of Branchiostoma floridae (Florida lancelet).